A 341-amino-acid chain; its full sequence is Phosphoribosylformylglycinamidine cyclo-ligase (341 aa).

It belongs to the AIR synthase family.

It is found in the cytoplasm. It catalyses the reaction 2-formamido-N(1)-(5-O-phospho-beta-D-ribosyl)acetamidine + ATP = 5-amino-1-(5-phospho-beta-D-ribosyl)imidazole + ADP + phosphate + H(+). The protein operates within purine metabolism; IMP biosynthesis via de novo pathway; 5-amino-1-(5-phospho-D-ribosyl)imidazole from N(2)-formyl-N(1)-(5-phospho-D-ribosyl)glycinamide: step 2/2. The protein is Phosphoribosylformylglycinamidine cyclo-ligase of Synechococcus elongatus (strain ATCC 33912 / PCC 7942 / FACHB-805) (Anacystis nidulans R2).